The primary structure comprises 121 residues: Large ribosomal subunit protein bL12 (121 aa).

The protein belongs to the bacterial ribosomal protein bL12 family. In terms of assembly, homodimer. Part of the ribosomal stalk of the 50S ribosomal subunit. Forms a multimeric L10(L12)X complex, where L10 forms an elongated spine to which 2 to 4 L12 dimers bind in a sequential fashion. Binds GTP-bound translation factors.

Its function is as follows. Forms part of the ribosomal stalk which helps the ribosome interact with GTP-bound translation factors. Is thus essential for accurate translation. This chain is Large ribosomal subunit protein bL12, found in Pectobacterium carotovorum subsp. carotovorum (strain PC1).